A 474-amino-acid polypeptide reads, in one-letter code: Aspartate ammonia-lyase (474 aa).

L-aspartate is bound by residues T105, S144, T145, N146, and T191. The interval 322–331 (GSSIMPGKVN) is SS loop. The active-site Proton acceptor is S323. Positions 324 and 329 each coordinate L-aspartate.

The protein belongs to the class-II fumarase/aspartase family. Aspartase subfamily. Homotetramer.

It carries out the reaction L-aspartate = fumarate + NH4(+). The catalysed reaction is L-phenylalanine = (E)-cinnamate + NH4(+). Its activity is regulated as follows. Does not require any divalent metal ion for activation of catalysis, but the activity is slightly increased in the presence of Mg(2+), Mn(2+), Ca(2+) or Co(2+). Functionally, catalyzes the reversible conversion of L-aspartate to fumarate and ammonia. Can also utilize L-phenylalanine to form cinnamic acid. Exhibits the highest specific activity towards L-phenylalanine, but catalytic efficiency is 3-fold higher with L-aspartate. The polypeptide is Aspartate ammonia-lyase (Pseudomonas aeruginosa (strain ATCC 15692 / DSM 22644 / CIP 104116 / JCM 14847 / LMG 12228 / 1C / PRS 101 / PAO1)).